A 316-amino-acid polypeptide reads, in one-letter code: tRNA dimethylallyltransferase (316 aa).

Residue 17 to 24 (GPTASGKT) coordinates ATP. 19–24 (TASGKT) contributes to the substrate binding site. Interaction with substrate tRNA regions lie at residues 42–45 (DSAL), 166–170 (QRLSR), 247–252 (RCVGYR), and 280–287 (KRQITWLR).

Belongs to the IPP transferase family. In terms of assembly, monomer. Mg(2+) serves as cofactor.

The enzyme catalyses adenosine(37) in tRNA + dimethylallyl diphosphate = N(6)-dimethylallyladenosine(37) in tRNA + diphosphate. Its function is as follows. Catalyzes the transfer of a dimethylallyl group onto the adenine at position 37 in tRNAs that read codons beginning with uridine, leading to the formation of N6-(dimethylallyl)adenosine (i(6)A). The sequence is that of tRNA dimethylallyltransferase from Shigella boydii serotype 18 (strain CDC 3083-94 / BS512).